A 360-amino-acid polypeptide reads, in one-letter code: Aminomethyltransferase (360 aa).

Belongs to the GcvT family. In terms of assembly, the glycine cleavage system is composed of four proteins: P, T, L and H.

It carries out the reaction N(6)-[(R)-S(8)-aminomethyldihydrolipoyl]-L-lysyl-[protein] + (6S)-5,6,7,8-tetrahydrofolate = N(6)-[(R)-dihydrolipoyl]-L-lysyl-[protein] + (6R)-5,10-methylene-5,6,7,8-tetrahydrofolate + NH4(+). The glycine cleavage system catalyzes the degradation of glycine. The chain is Aminomethyltransferase from Pseudomonas putida (strain ATCC 47054 / DSM 6125 / CFBP 8728 / NCIMB 11950 / KT2440).